The primary structure comprises 370 residues: 3-isopropylmalate dehydrogenase (370 aa).

Residue 77 to 90 (GPKWDSVPYEVRPE) coordinates NAD(+). Residues Arg-97, Arg-107, Arg-135, and Asp-226 each contribute to the substrate site. Asp-226, Asp-250, and Asp-254 together coordinate Mg(2+). 290 to 302 (GSAPDIAGQGLAN) is an NAD(+) binding site.

This sequence belongs to the isocitrate and isopropylmalate dehydrogenases family. LeuB type 1 subfamily. As to quaternary structure, homodimer. Mg(2+) is required as a cofactor. The cofactor is Mn(2+).

It localises to the cytoplasm. It catalyses the reaction (2R,3S)-3-isopropylmalate + NAD(+) = 4-methyl-2-oxopentanoate + CO2 + NADH. The protein operates within amino-acid biosynthesis; L-leucine biosynthesis; L-leucine from 3-methyl-2-oxobutanoate: step 3/4. Catalyzes the oxidation of 3-carboxy-2-hydroxy-4-methylpentanoate (3-isopropylmalate) to 3-carboxy-4-methyl-2-oxopentanoate. The product decarboxylates to 4-methyl-2 oxopentanoate. In Nitrobacter winogradskyi (strain ATCC 25391 / DSM 10237 / CIP 104748 / NCIMB 11846 / Nb-255), this protein is 3-isopropylmalate dehydrogenase.